Consider the following 112-residue polypeptide: Probable insulin-like peptide beta-type 5 (112 aa).

The signal sequence occupies residues 1–19 (MNSVFTIIFVLCALQVAAS). The propeptide at 20 to 58 (FRQSFGPSMSEESASMQLLRELQHNMMESAHRPMPRARR) is removed; by convertase egl-3. Cystine bridges form between C68–C97, C80–C110, C84–C111, and C96–C101.

Belongs to the insulin family. Post-translationally, may be processed by serine endoprotease bli-4. As to expression, expressed by ASI and ASJ sensory neurons.

It is found in the secreted. In terms of biological role, probable insulin-like peptide which negatively regulates synapse development at the neuromuscular junctions. Probably acts as a daf-2/InsR agonist ligand to prevent dauer formation under optimal environmental conditions. Acts on AWC sensory neurons to regulate high salt chemotaxis responses. The chain is Probable insulin-like peptide beta-type 5 (ins-6) from Caenorhabditis elegans.